A 358-amino-acid chain; its full sequence is tRNA-specific 2-thiouridylase MnmA 2 (358 aa).

ATP is bound by residues 11–18 (GMSGGVDS) and Met37. The Nucleophile role is filled by Cys106. Cys106 and Cys202 are oxidised to a cystine. An ATP-binding site is contributed by Gly130. Residues 152 to 154 (KDQ) are interaction with tRNA. Cys202 functions as the Cysteine persulfide intermediate in the catalytic mechanism. The tract at residues 308-309 (RY) is interaction with tRNA.

The protein belongs to the MnmA/TRMU family.

It is found in the cytoplasm. The catalysed reaction is S-sulfanyl-L-cysteinyl-[protein] + uridine(34) in tRNA + AH2 + ATP = 2-thiouridine(34) in tRNA + L-cysteinyl-[protein] + A + AMP + diphosphate + H(+). Functionally, catalyzes the 2-thiolation of uridine at the wobble position (U34) of tRNA, leading to the formation of s(2)U34. The protein is tRNA-specific 2-thiouridylase MnmA 2 of Clostridium tetani (strain Massachusetts / E88).